The chain runs to 316 residues: L-lactate dehydrogenase (316 aa).

NAD(+) contacts are provided by residues Val-15, Asp-36, Arg-41, Tyr-66, and 80 to 81; that span reads GA. Substrate contacts are provided by residues Gln-83, Arg-90, and 122–125; that span reads NPVD. Residues 120–122 and Thr-145 contribute to the NAD(+) site; that span reads ATN. Position 150–153 (150–153) interacts with substrate; it reads DTAR. Beta-D-fructose 1,6-bisphosphate is bound by residues Arg-155 and His-170. The Proton acceptor role is filled by His-177. A Phosphotyrosine modification is found at Tyr-222. Thr-231 provides a ligand contact to substrate. A disordered region spans residues 287 to 316; the sequence is DPGLSDEEREALRDSARALRDSRADLTVGT. Over residues 296–310 the composition is skewed to basic and acidic residues; it reads EALRDSARALRDSRA.

Belongs to the LDH/MDH superfamily. LDH family. Homotetramer.

It is found in the cytoplasm. It catalyses the reaction (S)-lactate + NAD(+) = pyruvate + NADH + H(+). The protein operates within fermentation; pyruvate fermentation to lactate; (S)-lactate from pyruvate: step 1/1. With respect to regulation, allosterically activated by fructose 1,6-bisphosphate (FBP). In terms of biological role, catalyzes the conversion of lactate to pyruvate. This chain is L-lactate dehydrogenase, found in Salinibacter ruber (strain DSM 13855 / M31).